Here is a 196-residue protein sequence, read N- to C-terminus: UPF0215 protein MM_1007 (196 aa).

The protein belongs to the UPF0215 family.

The protein is UPF0215 protein MM_1007 of Methanosarcina mazei (strain ATCC BAA-159 / DSM 3647 / Goe1 / Go1 / JCM 11833 / OCM 88) (Methanosarcina frisia).